A 312-amino-acid chain; its full sequence is Dehydrin CAS31 (312 aa).

2 disordered regions span residues 1–88 (MSQY…HTGG) and 248–287 (GTEQ…HHGE). The segment covering 21 to 30 (PLTSQGQVDQ) has biased composition (polar residues). Gly residues predominate over residues 35 to 46 (ISGGGMTGATGH). The segment covering 55 to 66 (HGVGVDQTTGFG) has biased composition (low complexity). Gly residues-rich tracts occupy residues 67 to 88 (SNTG…HTGG) and 256 to 278 (TGTG…GTTG).

It belongs to the plant dehydrin family. In terms of assembly, interacts with the leghemoglobin LB120-1 in the cytoplasm; this interaction leads to LB120-1 protection from denaturation under thermal and drought stresses. In terms of tissue distribution, expressed in nodules and roots.

Its subcellular location is the cytoplasm. Its function is as follows. Intrinsically disordered protein acting as a chaperone. Ensures leghemoglobins (e.g. LB120-1) protection from denaturation under thermal and drought stresses to delay root nodule nitrogenase inactivation and subsequent nodule senescence, thus supporting symbiotic nitrogen fixation (SNF). The protein is Dehydrin CAS31 of Medicago truncatula (Barrel medic).